Consider the following 308-residue polypeptide: Glycosyltransferase 6 domain-containing protein 1 (308 aa).

Over 1 to 6 (MNSKRM) the chain is Cytoplasmic. A helical; Signal-anchor for type II membrane protein transmembrane segment spans residues 7-23 (LLLVLFAFSLMLVERYF). Topologically, residues 24-308 (RNHQVEELRL…KVAHDSHRKL (285 aa)) are lumenal. N-linked (GlcNAc...) asparagine glycosylation occurs at Asn74. Substrate contacts are provided by residues 82–87 (FATGRF), 173–175 (AVN), and 195–198 (HAWW). Glu263 acts as the Nucleophile in catalysis.

This sequence belongs to the glycosyltransferase 6 family. Mn(2+) is required as a cofactor.

It is found in the membrane. This chain is Glycosyltransferase 6 domain-containing protein 1 (GLT6D1), found in Macaca fascicularis (Crab-eating macaque).